A 103-amino-acid polypeptide reads, in one-letter code: Co-chaperonin GroES (103 aa).

Belongs to the GroES chaperonin family. In terms of assembly, heptamer of 7 subunits arranged in a ring. Interacts with the chaperonin GroEL.

The protein localises to the cytoplasm. Functionally, together with the chaperonin GroEL, plays an essential role in assisting protein folding. The GroEL-GroES system forms a nano-cage that allows encapsulation of the non-native substrate proteins and provides a physical environment optimized to promote and accelerate protein folding. GroES binds to the apical surface of the GroEL ring, thereby capping the opening of the GroEL channel. The polypeptide is Co-chaperonin GroES (Prochlorococcus marinus (strain MIT 9313)).